A 512-amino-acid polypeptide reads, in one-letter code: Cytochrome P450 monooxygenase paxQ (512 aa).

2 helical membrane-spanning segments follow: residues 3 to 23 (FVLSALQRDSWGIAAIILVSI) and 35 to 55 (LQIPVPYVGKCGILGPWISAL). Residue cysteine 453 participates in heme binding.

The protein belongs to the cytochrome P450 family. Heme serves as cofactor.

The protein resides in the membrane. It participates in secondary metabolite biosynthesis. Its function is as follows. Cytochrome P450 monooxygenase; part of the gene cluster that mediates the biosynthesis of paxilline, a mycotoxin that acts as an inhibitor of mammalian maxi-K channels. PaxG, the geranylgeranyl diphosphate (GGPP) synthase is proposed to catalyze the first step in paxilline biosynthesis. Condensation of indole-3-glycerol phosphate with GGPP by paxC then forms 3-geranylgeranylindole (3-GGI), followed by epoxidation and cyclization of this intermediate (by paxM and paxB) to form paspaline. Paspaline is subsequently converted to 13-desoxypaxilline by paxP, the latter being then converted to paxilline by paxQ. Finally paxilline can be mono- and di-prenylated by paxD. PaxQ can also utilized beta-paxitriol and alpha-PC-M6 as substrates converting them to alpha-paxitriol. The polypeptide is Cytochrome P450 monooxygenase paxQ (Penicillium paxilli).